The sequence spans 633 residues: Extracellular metalloproteinase 3 (633 aa).

The first 18 residues, 1 to 18, serve as a signal peptide directing secretion; it reads MHGLLLAGLLALPMNVLA. The propeptide occupies 19 to 246; sequence HPAEQHASNV…VHNVVDYVAS (228 aa). The N-linked (GlcNAc...) asparagine glycan is linked to asparagine 410. Histidine 429 is a Zn(2+) binding site. Glutamate 430 is a catalytic residue. Position 433 (histidine 433) interacts with Zn(2+). N-linked (GlcNAc...) asparagine glycosylation is found at asparagine 480 and asparagine 622.

The protein belongs to the peptidase M36 family. The cofactor is Zn(2+).

Its subcellular location is the secreted. Functionally, secreted metalloproteinase probably acting as a virulence factor. The chain is Extracellular metalloproteinase 3 (MEP3) from Trichophyton equinum (Horse ringworm fungus).